We begin with the raw amino-acid sequence, 1313 residues long: Envelopment polyprotein (1313 aa).

The signal sequence occupies residues 1–17; that stretch reads MIFTILNVLTRAMLVMS. Topologically, residues 18 to 712 are lumenal; sequence MYSLTTWDST…HSTLSAILTS (695 aa). Residues asparagine 76 and asparagine 102 are each glycosylated (N-linked (GlcNAc...) asparagine; by host). Positions 178-237 form a coiled coil; it reads MQVLMSEIEQLKNQLSKKRNERGQEKRDAEKVMSDLMARNSDLRKHNDILTAEISQMKNK. The internal signal sequence for glycoprotein N stretch occupies residues 250 to 270; sequence TVVPAILSVALLSSSVAPIIA. 12 disulfides stabilise this stretch: cysteine 303/cysteine 312, cysteine 352/cysteine 362, cysteine 373/cysteine 404, cysteine 394/cysteine 407, cysteine 432/cysteine 579, cysteine 450/cysteine 460, cysteine 501/cysteine 557, cysteine 525/cysteine 536, cysteine 543/cysteine 548, cysteine 602/cysteine 605, cysteine 609/cysteine 679, and cysteine 629/cysteine 634. An N-linked (GlcNAc...) asparagine; by host glycan is attached at asparagine 496. The helical transmembrane segment at 713-733 threads the bilayer; it reads FLLILFIYTVFSVTTNILYVL. The segment at 731 to 773 is golgi retention signal; it reads YVLRLIPKQLKSPVGWLKLFINWLLTALRIKTRNVMRRINQRI. Residues 734–791 lie on the Cytoplasmic side of the membrane; that stretch reads RLIPKQLKSPVGWLKLFINWLLTALRIKTRNVMRRINQRIGWVDHHDVERPRHREPMR. The important for correct targeting of the glycoproteins to the Golgi complex but not for heterodimerization stretch occupies residues 769 to 773; the sequence is INQRI. The tract at residues 793 to 809 is internal signal sequence for glycoprotein C; it reads FKTTLLLTLIMMTGGNA. Cystine bridges form between cysteine 810/cysteine 850, cysteine 823/cysteine 832, cysteine 875/cysteine 971, cysteine 890/cysteine 1084, cysteine 896/cysteine 944, cysteine 902/cysteine 951, cysteine 907/cysteine 933, cysteine 937/cysteine 942, cysteine 1053/cysteine 1066, cysteine 1148/cysteine 1220, cysteine 1158/cysteine 1161, and cysteine 1168/cysteine 1202. Over 810–1278 the chain is Lumenal; it reads CSNTVVANSK…LDWLGGPMKA (469 aa). A fusion loop region spans residues 896–902; the sequence is CHLVGDC. The segment at 938-949 is fusion loop; that stretch reads GAIGCGCFNINP. N-linked (GlcNAc...) asparagine; by host glycosylation is present at asparagine 1154. An N-linked (GlcNAc...) asparagine; by host glycan is attached at asparagine 1243. The helical transmembrane segment at 1279-1299 threads the bilayer; it reads ILKILGFIAIGIVCFVLFMIL. Residues 1300-1313 are Cytoplasmic-facing; the sequence is IRIAVNSINIKKKN.

Belongs to the phlebovirus envelope glycoprotein family. Heterodimer with glycoprotein C. Interacts with nucleocapsid protein N and with the polymerase L in order to package them into virus particles. As to quaternary structure, heterodimer with glycoprotein C. Homotrimer (postfusion). Interacts with nucleocapsid protein N and with the polymerase L in order to package them into virus particles. Interacts with host E3 ubiquitin-protein ligase UBR4; this interaction is important for viral RNA production. In terms of processing, specific enzymatic cleavages in vivo yield mature proteins including NSm protein, Glycoprotein C, and Glycoprotein N. Post-translationally, glycosylated. The glycans can attach to host CD209/DC-SIGN, and may play a role in virus entry into dendritic cells. Palmitoylated.

It localises to the virion membrane. It is found in the host Golgi apparatus membrane. The protein localises to the host endoplasmic reticulum membrane. Functionally, structural component of the virion that interacts with glycoprotein C. It shields the hydrophobic fusion loops of the glycoprotein C, preventing premature fusion. The glycoprotein protrusions are arranged on an icosahedral lattice, with T=12 triangulation. They are able to attach the virion to the host cell receptor CD209/DC-SIGN and to promote fusion of membranes with the late endosome after endocytosis of the virion. Plays a role in the packaging of ribonucleoproteins and polymerase during virus assembly. Structural component of the virion that interacts with glycoprotein N. Acts as a class II fusion protein that is activated upon acidification and subsequent repositioning of the glycoprotein N. The glycoprotein protrusions are arranged on an icosahedral lattice, with T=12 triangulation. They are able to attach the virion to the host cell receptor CD209/DC-SIGN and to promote fusion of membranes with the late endosome after endocytosis of the virion. In terms of biological role, plays a role for virus dissemination in mosquitoes. The sequence is that of Envelopment polyprotein (GP) from Homo sapiens (Human).